The chain runs to 946 residues: DDB1- and CUL4-associated factor 5 (946 aa).

6 WD repeats span residues 51–91 (GHFG…HSRV), 99–139 (EHHS…LDVF), 140–180 (AHED…HGEP), 185–225 (NYPS…SSLL), 277–317 (FNSC…EAGG), and 331–370 (GHRS…GCTG). The disordered stretch occupies residues 449-478 (GVSERSGYTDSESSASLPRSPPPTVDESAD). The span at 454–465 (SGYTDSESSASL) shows a compositional bias: polar residues. Thr500 is modified (phosphothreonine). 3 disordered regions span residues 527-656 (LSNE…MESV), 675-860 (SNNK…ELET), and 894-946 (CETP…KLKT). Ser531 and Ser533 each carry phosphoserine. Residues 531–544 (SDSEENVCEAELDT) are compositionally biased toward acidic residues. Residues 555-567 (PEDGSSSPSSSTS) show a composition bias toward low complexity. The segment covering 579-592 (ATTRQRNAMRRRQK) has biased composition (basic residues). The span at 625–638 (LSPSPDSSPERSAS) shows a compositional bias: low complexity. 3 positions are modified to phosphoserine: Ser626, Ser628, and Ser645. Over residues 691 to 701 (EGRAGTSHKDN) the composition is skewed to basic and acidic residues. 2 stretches are compositionally biased toward polar residues: residues 760–769 (GTSQDTNNSG) and 808–819 (TLNSASGNCPRT).

In terms of assembly, interacts with DDB1, CUL4A or CUL4B. Interacts with L3MBTL3. Interacts with SOX2. Interacts with DNMT1. Interacts with E2F1.

The protein operates within protein modification; protein ubiquitination. Its function is as follows. Is a substrate receptor for the CUL4-DDB1 E3 ubiquitin-protein ligase complex (CRL4), involved in the ubiquitination of a set of methylated non-histone proteins, including SOX2. The complex CRL4-DCAF5 is also involved in the ubiquitination of methylated DNMT1 and E2F1. The sequence is that of DDB1- and CUL4-associated factor 5 (Dcaf5) from Mus musculus (Mouse).